The following is an 884-amino-acid chain: Translation initiation factor IF-2 (884 aa).

Basic and acidic residues-rich tracts occupy residues 110-153 and 193-234; these read AKAK…KEKA and KQKE…DHHV. The tract at residues 110–291 is disordered; that stretch reads AKAKAEADAK…NRSTAPQSMA (182 aa). The segment covering 255–268 has biased composition (basic residues); it reads GRRARNKPTNKKRG. The region spanning 384 to 553 is the tr-type G domain; it reads TRAPVVTIMG…LLQSEVLELK (170 aa). The segment at 393–400 is G1; the sequence is GHVDHGKT. 393–400 provides a ligand contact to GTP; that stretch reads GHVDHGKT. Residues 418–422 form a G2 region; it reads GITQH. The interval 439-442 is G3; that stretch reads DTPG. Residues 439 to 443 and 493 to 496 each bind GTP; these read DTPGH and NKMD. A G4 region spans residues 493–496; that stretch reads NKMD. Residues 529–531 are G5; that stretch reads SAK.

This sequence belongs to the TRAFAC class translation factor GTPase superfamily. Classic translation factor GTPase family. IF-2 subfamily.

It localises to the cytoplasm. Functionally, one of the essential components for the initiation of protein synthesis. Protects formylmethionyl-tRNA from spontaneous hydrolysis and promotes its binding to the 30S ribosomal subunits. Also involved in the hydrolysis of GTP during the formation of the 70S ribosomal complex. This is Translation initiation factor IF-2 from Shewanella denitrificans (strain OS217 / ATCC BAA-1090 / DSM 15013).